Here is a 1337-residue protein sequence, read N- to C-terminus: DNA-directed RNA polymerase subunit beta' (1337 aa).

Residues cysteine 60, cysteine 62, cysteine 75, and cysteine 78 each contribute to the Zn(2+) site. 3 residues coordinate Mg(2+): aspartate 536, aspartate 538, and aspartate 540. 4 residues coordinate Zn(2+): cysteine 895, cysteine 974, cysteine 981, and cysteine 984.

It belongs to the RNA polymerase beta' chain family. In terms of assembly, the RNAP catalytic core consists of 2 alpha, 1 beta, 1 beta' and 1 omega subunit. When a sigma factor is associated with the core the holoenzyme is formed, which can initiate transcription. Requires Mg(2+) as cofactor. Zn(2+) serves as cofactor.

It catalyses the reaction RNA(n) + a ribonucleoside 5'-triphosphate = RNA(n+1) + diphosphate. In terms of biological role, DNA-dependent RNA polymerase catalyzes the transcription of DNA into RNA using the four ribonucleoside triphosphates as substrates. The protein is DNA-directed RNA polymerase subunit beta' of Bifidobacterium adolescentis (strain ATCC 15703 / DSM 20083 / NCTC 11814 / E194a).